The chain runs to 428 residues: C4-dicarboxylate transport protein (428 aa).

8 consecutive transmembrane segments (helical) span residues 8 to 28 (SLYF…HFYP), 44 to 64 (LIKM…IAGM), 76 to 96 (VALL…LIIV), 142 to 162 (IGAF…LFGF), 184 to 204 (VIFG…FGAM), 222 to 242 (LIIC…GSIA), 326 to 346 (IVHQ…AAGV), and 352 to 372 (IVLA…LALI).

Belongs to the dicarboxylate/amino acid:cation symporter (DAACS) (TC 2.A.23) family.

It localises to the cell inner membrane. Responsible for the transport of dicarboxylates such as succinate, fumarate, and malate from the periplasm across the membrane. The protein is C4-dicarboxylate transport protein of Shigella dysenteriae serotype 1 (strain Sd197).